A 506-amino-acid polypeptide reads, in one-letter code: Ribose import ATP-binding protein RbsA (506 aa).

2 consecutive ABC transporter domains span residues 5-241 (LALT…VGRR) and 254-498 (RDAA…TSDV). 37–44 (GENGAGKS) provides a ligand contact to ATP.

It belongs to the ABC transporter superfamily. Ribose importer (TC 3.A.1.2.1) family. In terms of assembly, the complex is composed of an ATP-binding protein (RbsA), two transmembrane proteins (RbsC) and a solute-binding protein (RbsB).

It localises to the cell inner membrane. The catalysed reaction is D-ribose(out) + ATP + H2O = D-ribose(in) + ADP + phosphate + H(+). Its function is as follows. Part of the ABC transporter complex RbsABC involved in ribose import. Responsible for energy coupling to the transport system. This Burkholderia mallei (strain ATCC 23344) protein is Ribose import ATP-binding protein RbsA.